A 718-amino-acid chain; its full sequence is MTQAHSKSCFHQFWDGLQIKRSSDSFTVELLPSLGATINHSNKLQKFIISPYDPRYRSWELFLIVLVVYSAWICPFELAFLRDLPSKLLLVENIVDIFFAIDIVLTFFVAYVDSKTHLLVDDRKRIAMRYLSTWFIFDVCSTAPFQPIILLFTHKGNDIAFKVLNLLRLWRLHRVSSLFARLEKDIRFNYFWTRCSKLISVTLFAVHCAGCFNYMIADRYPNPEKTWIGAVMSTFRSESLWTRYITALYWSITTLTTTGYGDLHAENPTEMLFDIVYMMFNLGLTAYLIGNMTNLVVHGTSRTRKFRDSIQAASEFAARNQLPENIKQQVLSHFCLQFKTEGLNQQVMLDCLPKGIRSSIAYSLFFPIIRQAYLFNGVSGNFIAELVMEVQAEYFPPKEDIILQNEGEADVYIVVSGAVNIITTIHGNEQVYEKIAEGEMFGEVGSLCNIPQPFTCRTAELSQLLRISKTRLREIIEENREDSNILMNNLVQKLKLRESLPDMNQPDRRFLSKYELFHVPREAWLLKKSQLHYTEHTSRDSSNNTPVFGGDRYSRQLLGEATRSSASENENSSMTDKEENHDEVHTNCEIKKRTEEHCIQINSEDSSSTYSQRTMNATVQTGSPHKTEENITRRIPDEYYIKEANKRVTIHKYRHNSTVSAAQNGKLIKLPTSLEELFKIGSQKFQGFHPRKVVSRDYAEIDDVSVIRDGDHLFLLEM.

Over 1–60 (MTQAHSKSCFHQFWDGLQIKRSSDSFTVELLPSLGATINHSNKLQKFIISPYDPRYRSWE) the chain is Cytoplasmic. A helical membrane pass occupies residues 61–81 (LFLIVLVVYSAWICPFELAFL). At 82–88 (RDLPSKL) the chain is on the extracellular side. Residues 89–109 (LLVENIVDIFFAIDIVLTFFV) traverse the membrane as a helical segment. Topologically, residues 110-132 (AYVDSKTHLLVDDRKRIAMRYLS) are cytoplasmic. A helical membrane pass occupies residues 133–153 (TWFIFDVCSTAPFQPIILLFT). The Extracellular segment spans residues 154–162 (HKGNDIAFK). The chain crosses the membrane as a helical; Voltage-sensor span at residues 163–183 (VLNLLRLWRLHRVSSLFARLE). The Cytoplasmic segment spans residues 184–197 (KDIRFNYFWTRCSK). Residues 198-218 (LISVTLFAVHCAGCFNYMIAD) form a helical membrane-spanning segment. Topologically, residues 219-245 (RYPNPEKTWIGAVMSTFRSESLWTRYI) are extracellular. The segment at residues 246–265 (TALYWSITTLTTTGYGDLHA) is an intramembrane region (pore-forming). At 266-269 (ENPT) the chain is on the extracellular side. Residues 270-290 (EMLFDIVYMMFNLGLTAYLIG) form a helical membrane-spanning segment. Topologically, residues 291 to 718 (NMTNLVVHGT…DGDHLFLLEM (428 aa)) are cytoplasmic. 374–493 (LFNGVSGNFI…NILMNNLVQK (120 aa)) provides a ligand contact to a nucleoside 3',5'-cyclic phosphate. The interval 560 to 584 (EATRSSASENENSSMTDKEENHDEV) is disordered. Positions 562 to 574 (TRSSASENENSSM) are enriched in polar residues. Positions 575–584 (TDKEENHDEV) are enriched in basic and acidic residues. In terms of domain architecture, KHA spans 647-718 (RVTIHKYRHN…DGDHLFLLEM (72 aa)).

This sequence belongs to the potassium channel family. Plant (TC 1.A.1.4) subfamily.

The protein resides in the membrane. Its function is as follows. Probable inward-rectifying potassium channel. Assuming opened or closed conformations in response to the voltage difference across the membrane, the channel is activated by hyperpolarization. In Oryza sativa subsp. japonica (Rice), this protein is Potassium channel KAT1.